A 313-amino-acid chain; its full sequence is Olfactory receptor 56A4 (313 aa).

Residues 1 to 28 (MASPSNDSTAPVSEFLLICFPNFQSWQH) are Extracellular-facing. N6 carries an N-linked (GlcNAc...) asparagine glycan. The helical transmembrane segment at 29-49 (WLSLPLSLLFLLAMGANTTLL) threads the bilayer. The Cytoplasmic segment spans residues 50–57 (ITIQLEAS). The chain crosses the membrane as a helical span at residues 58–78 (LHQPLYYLLSLLSLLDIVLCL). Over 79–102 (TVIPKVLAIFWFDLRSISFPACFL) the chain is Extracellular. A disulfide bridge connects residues C100 and C192. A helical membrane pass occupies residues 103–123 (QMFIMNSFLTMESCTFMVMAY). The Cytoplasmic portion of the chain corresponds to 124–142 (DRYVAICHPLRYPSIITDQ). The helical transmembrane segment at 143–163 (FVARAVVFVIARNAFVSLPVP) threads the bilayer. The Extracellular segment spans residues 164-199 (MLSARLRYCAGNIIKNCICSNLSVSKLSCDDITFNQ). N184 carries an N-linked (GlcNAc...) asparagine glycan. Residues 200–220 (LYQFVAGWTLLGSDLILIVIS) traverse the membrane as a helical segment. The Cytoplasmic segment spans residues 221 to 240 (YSFILKVVLRIKAEGAVAKA). A helical membrane pass occupies residues 241–261 (LSTCGSHFILILFFSTVLLVL). At 262–276 (VITNLARKRIPPDVP) the chain is on the extracellular side. A helical transmembrane segment spans residues 277-297 (ILLNILHHLIPPALNPIVYGV). The Cytoplasmic portion of the chain corresponds to 298 to 313 (RTKEIKQGIQNLLKRL).

This sequence belongs to the G-protein coupled receptor 1 family.

It is found in the cell membrane. Odorant receptor. This chain is Olfactory receptor 56A4 (OR56A4), found in Homo sapiens (Human).